The primary structure comprises 391 residues: Calcium-binding and spermatid-specific protein 1 (391 aa).

3 disordered regions span residues 1–23, 90–110, and 152–221; these read MAED…TPTE, PEKE…GSIT, and KEVV…KEVT. Low complexity predominate over residues 90-101; sequence PEKEITTPTETP. A phosphoserine mark is found at serine 253 and serine 269. A disordered region spans residues 271–299; sequence EKAKDNVEDPLNDEESTDGANDWMEKETA. Residues 278–287 show a composition bias toward acidic residues; it reads EDPLNDEEST. Serine 314, serine 347, serine 357, serine 372, and serine 376 each carry phosphoserine. Positions 330-351 are disordered; the sequence is EESHVNTTDLPENETTESVTNV.

In terms of tissue distribution, detected only in testis. Expressed from stages X to VIII of the seminiferous epithelial cycle. Expressed from step 13 to step 16 of spermatid development (at protein level).

Its subcellular location is the cytoplasm. It localises to the mitochondrion inner membrane. It is found in the cell projection. The protein localises to the cilium. The protein resides in the flagellum. Its subcellular location is the cytoplasmic vesicle. It localises to the secretory vesicle. It is found in the acrosome. Its function is as follows. Calcium-binding protein. Essential for maintaining the structural integrity of the sperm flagella. In Mus musculus (Mouse), this protein is Calcium-binding and spermatid-specific protein 1 (Cabs1).